A 211-amino-acid chain; its full sequence is Small ribosomal subunit protein uS3 (211 aa).

Residues 38–106 (LRKFIKKAFY…NIELNIIEVK (69 aa)) enclose the KH type-2 domain.

Belongs to the universal ribosomal protein uS3 family. Part of the 30S ribosomal subunit. Forms a tight complex with proteins S10 and S14.

In terms of biological role, binds the lower part of the 30S subunit head. Binds mRNA in the 70S ribosome, positioning it for translation. In Ehrlichia ruminantium (strain Gardel), this protein is Small ribosomal subunit protein uS3.